Here is an 85-residue protein sequence, read N- to C-terminus: Large ribosomal subunit protein bL27 (85 aa).

The disordered stretch occupies residues Met-1 to Phe-26.

The protein belongs to the bacterial ribosomal protein bL27 family.

In Roseiflexus sp. (strain RS-1), this protein is Large ribosomal subunit protein bL27.